Reading from the N-terminus, the 239-residue chain is Sugar fermentation stimulation protein homolog (239 aa).

It belongs to the SfsA family.

This Caulobacter vibrioides (strain ATCC 19089 / CIP 103742 / CB 15) (Caulobacter crescentus) protein is Sugar fermentation stimulation protein homolog.